The following is a 363-amino-acid chain: Putative RAD2-like endonuclease 095R (363 aa).

It belongs to the XPG/RAD2 endonuclease family. It depends on Mg(2+) as a cofactor.

The protein localises to the host nucleus. Functionally, probable endonuclease. The protein is Putative RAD2-like endonuclease 095R of Frog virus 3 (isolate Goorha) (FV-3).